We begin with the raw amino-acid sequence, 143 residues long: Small ribosomal subunit protein eS12 (143 aa).

The protein belongs to the eukaryotic ribosomal protein eS12 family. Component of the small ribosomal subunit. Mature ribosomes consist of a small (40S) and a large (60S) subunit. The 40S subunit contains about 32 different proteins and 1 molecule of RNA (18S). The 60S subunit contains 45 different proteins and 3 molecules of RNA (25S, 5.8S and 5S).

The protein localises to the cytoplasm. Its function is as follows. Component of the ribosome, a large ribonucleoprotein complex responsible for the synthesis of proteins in the cell. The small ribosomal subunit (SSU) binds messenger RNAs (mRNAs) and translates the encoded message by selecting cognate aminoacyl-transfer RNA (tRNA) molecules. The large subunit (LSU) contains the ribosomal catalytic site termed the peptidyl transferase center (PTC), which catalyzes the formation of peptide bonds, thereby polymerizing the amino acids delivered by tRNAs into a polypeptide chain. The nascent polypeptides leave the ribosome through a tunnel in the LSU and interact with protein factors that function in enzymatic processing, targeting, and the membrane insertion of nascent chains at the exit of the ribosomal tunnel. The chain is Small ribosomal subunit protein eS12 (RPS12) from Candida albicans (strain SC5314 / ATCC MYA-2876) (Yeast).